The chain runs to 125 residues: MARVKRGVTSHAKHKKVLKAAKGYYGRRKNTIRIAKQAVEKGMQYAYRDRKNKKRTFRALWIQRLNAAVREHGLTYSRFIDGLAKSGIVVDRKALSELAIHEPASFAAVVEKAKAALPQNTAKAA.

It belongs to the bacterial ribosomal protein bL20 family.

Binds directly to 23S ribosomal RNA and is necessary for the in vitro assembly process of the 50S ribosomal subunit. It is not involved in the protein synthesizing functions of that subunit. The sequence is that of Large ribosomal subunit protein bL20 from Methylobacterium radiotolerans (strain ATCC 27329 / DSM 1819 / JCM 2831 / NBRC 15690 / NCIMB 10815 / 0-1).